Consider the following 210-residue polypeptide: 7-carboxy-7-deazaguanine synthase (210 aa).

Residues 12–14 (LQG) and R27 each bind substrate. Positions 18–210 (QAGKAAVFCR…VQTHKYLGLP (193 aa)) constitute a Radical SAM core domain. 3 residues coordinate [4Fe-4S] cluster: C31, C46, and C49. Residue T51 participates in Mg(2+) binding. T90 contacts substrate. Residues G92, 133 to 135 (SPK), and 173 to 176 (QPMD) each bind S-adenosyl-L-methionine. P210 provides a ligand contact to substrate.

Belongs to the radical SAM superfamily. 7-carboxy-7-deazaguanine synthase family. Homodimer. The cofactor is [4Fe-4S] cluster. It depends on S-adenosyl-L-methionine as a cofactor. Requires Mg(2+) as cofactor.

It catalyses the reaction 6-carboxy-5,6,7,8-tetrahydropterin + H(+) = 7-carboxy-7-deazaguanine + NH4(+). Its pathway is purine metabolism; 7-cyano-7-deazaguanine biosynthesis. Its function is as follows. Catalyzes the complex heterocyclic radical-mediated conversion of 6-carboxy-5,6,7,8-tetrahydropterin (CPH4) to 7-carboxy-7-deazaguanine (CDG), a step common to the biosynthetic pathways of all 7-deazapurine-containing compounds. The protein is 7-carboxy-7-deazaguanine synthase of Caulobacter vibrioides (strain ATCC 19089 / CIP 103742 / CB 15) (Caulobacter crescentus).